A 371-amino-acid chain; its full sequence is tRNA-specific 2-thiouridylase MnmA (371 aa).

ATP-binding positions include 22-29 and methionine 48; that span reads GLSGGVDS. The interaction with target base in tRNA stretch occupies residues 108-110; it reads NPD. Cysteine 113 (nucleophile) is an active-site residue. Cysteines 113 and 209 form a disulfide. Glycine 137 is a binding site for ATP. Positions 159–161 are interaction with tRNA; it reads KDQ. Cysteine 209 functions as the Cysteine persulfide intermediate in the catalytic mechanism.

It belongs to the MnmA/TRMU family.

The protein resides in the cytoplasm. It catalyses the reaction S-sulfanyl-L-cysteinyl-[protein] + uridine(34) in tRNA + AH2 + ATP = 2-thiouridine(34) in tRNA + L-cysteinyl-[protein] + A + AMP + diphosphate + H(+). Its function is as follows. Catalyzes the 2-thiolation of uridine at the wobble position (U34) of tRNA, leading to the formation of s(2)U34. In Coxiella burnetii (strain CbuG_Q212) (Coxiella burnetii (strain Q212)), this protein is tRNA-specific 2-thiouridylase MnmA.